Reading from the N-terminus, the 147-residue chain is UPF0047 protein sll1880 (147 aa).

This sequence belongs to the UPF0047 family.

This chain is UPF0047 protein sll1880, found in Synechocystis sp. (strain ATCC 27184 / PCC 6803 / Kazusa).